A 119-amino-acid chain; its full sequence is Large ribosomal subunit protein uL18 (119 aa).

The protein belongs to the universal ribosomal protein uL18 family. Part of the 50S ribosomal subunit; part of the 5S rRNA/L5/L18/L25 subcomplex. Contacts the 5S and 23S rRNAs.

In terms of biological role, this is one of the proteins that bind and probably mediate the attachment of the 5S RNA into the large ribosomal subunit, where it forms part of the central protuberance. The sequence is that of Large ribosomal subunit protein uL18 from Mesorhizobium japonicum (strain LMG 29417 / CECT 9101 / MAFF 303099) (Mesorhizobium loti (strain MAFF 303099)).